The following is a 397-amino-acid chain: Elongation factor Tu (397 aa).

A tr-type G domain is found at 10 to 206; that stretch reads KPHVNIGTIG…AVDDSIPEPQ (197 aa). Residues 19–26 form a G1 region; that stretch reads GHIDHGKT. GTP is bound at residue 19-26; that stretch reads GHIDHGKT. A Mg(2+)-binding site is contributed by Thr26. Positions 62–66 are G2; the sequence is GITIS. The interval 83–86 is G3; the sequence is DCPG. GTP is bound by residues 83 to 87 and 138 to 141; these read DCPGH and NKAD. A G4 region spans residues 138–141; that stretch reads NKAD. Residues 176–178 are G5; it reads SAL.

The protein belongs to the TRAFAC class translation factor GTPase superfamily. Classic translation factor GTPase family. EF-Tu/EF-1A subfamily. Monomer.

The protein localises to the cytoplasm. The enzyme catalyses GTP + H2O = GDP + phosphate + H(+). GTP hydrolase that promotes the GTP-dependent binding of aminoacyl-tRNA to the A-site of ribosomes during protein biosynthesis. This chain is Elongation factor Tu, found in Frankia alni (strain DSM 45986 / CECT 9034 / ACN14a).